The primary structure comprises 510 residues: Chromosomal replication initiator protein DnaA (510 aa).

The segment at 1 to 74 (MHTDLWERGC…EATLSELAGK (74 aa)) is domain I, interacts with DnaA modulators. A domain II region spans residues 74 to 173 (KPVRLELSLL…PTLSPAVSRG (100 aa)). The interval 125-168 (ARHDPQSVVPTPGGSANGRAAPRVGEPGGPVGTSTLPVAPTLSP) is disordered. Residues 174–390 (RLNPALTFDT…GALRKVLAYS (217 aa)) form a domain III, AAA+ region region. The ATP site is built by Gly-218, Gly-220, Lys-221, and Thr-222. A domain IV, binds dsDNA region spans residues 391 to 510 (RFSHKEISIN…LHVLEQTLKG (120 aa)).

It belongs to the DnaA family. As to quaternary structure, oligomerizes as a right-handed, spiral filament on DNA at oriC.

The protein localises to the cytoplasm. In terms of biological role, plays an essential role in the initiation and regulation of chromosomal replication. ATP-DnaA binds to the origin of replication (oriC) to initiate formation of the DNA replication initiation complex once per cell cycle. Binds the DnaA box (a 9 base pair repeat at the origin) and separates the double-stranded (ds)DNA. Forms a right-handed helical filament on oriC DNA; dsDNA binds to the exterior of the filament while single-stranded (ss)DNA is stabiized in the filament's interior. The ATP-DnaA-oriC complex binds and stabilizes one strand of the AT-rich DNA unwinding element (DUE), permitting loading of DNA polymerase. After initiation quickly degrades to an ADP-DnaA complex that is not apt for DNA replication. Binds acidic phospholipids. This chain is Chromosomal replication initiator protein DnaA, found in Leptothrix cholodnii (strain ATCC 51168 / LMG 8142 / SP-6) (Leptothrix discophora (strain SP-6)).